A 490-amino-acid polypeptide reads, in one-letter code: Subtilisin-like protease 8 (490 aa).

Positions 1–26 are cleaved as a signal peptide; the sequence is MKGLLSLSVLPVLAYASPMIVDSIHQ. Positions 27–134 are excised as a propeptide; that stretch reads DAAPILSSTN…YIERDSEVRA (108 aa). The Inhibitor I9 domain occupies 43 to 133; sequence SYIVVFKKGV…EYIERDSEVR (91 aa). Residues 144 to 450 enclose the Peptidase S8 domain; the sequence is PWGLARISHR…GGSDNYKEIV (307 aa). Active-site charge relay system residues include Asp-180 and His-212. Asn-282 carries an N-linked (GlcNAc...) asparagine glycan. Ser-378 functions as the Charge relay system in the catalytic mechanism. Residue Asn-455 is glycosylated (N-linked (GlcNAc...) asparagine).

It belongs to the peptidase S8 family.

It localises to the secreted. Its function is as follows. Secreted subtilisin-like serine protease with keratinolytic activity that contributes to pathogenicity. The polypeptide is Subtilisin-like protease 8 (SUB8) (Arthroderma otae (strain ATCC MYA-4605 / CBS 113480) (Microsporum canis)).